The chain runs to 218 residues: UPF0502 protein Geob_1184 (218 aa).

This sequence belongs to the UPF0502 family.

This chain is UPF0502 protein Geob_1184, found in Geotalea daltonii (strain DSM 22248 / JCM 15807 / FRC-32) (Geobacter daltonii).